The primary structure comprises 855 residues: Axonemal dynein light chain domain-containing protein 1 (855 aa).

The span at 1-17 (MSLPKTPSTPLNSASTS) shows a compositional bias: polar residues. The interval 1 to 31 (MSLPKTPSTPLNSASTSESKKLVSVATEGTR) is disordered. Coiled-coil stretches lie at residues 316 to 402 (QRIL…WSSA), 451 to 480 (LQKL…RETL), and 571 to 596 (SERQ…RING).

It localises to the cytoplasm. Its function is as follows. May be essential for spermiogenesis and male fertility probably by regulating the manchette dynamics, spermatid head shaping and sperm flagellum assembly. The sequence is that of Axonemal dynein light chain domain-containing protein 1 (AXDND1) from Macaca fascicularis (Crab-eating macaque).